The primary structure comprises 787 residues: Protein translocase subunit SecA (787 aa).

Residues Gln85, 103–107 (GEGKT), and Asp492 contribute to the ATP site.

Belongs to the SecA family. In terms of assembly, monomer and homodimer. Part of the essential Sec protein translocation apparatus which comprises SecA, SecYEG and auxiliary proteins SecDF. Other proteins may also be involved.

It localises to the cell membrane. The protein resides in the cytoplasm. It carries out the reaction ATP + H2O + cellular proteinSide 1 = ADP + phosphate + cellular proteinSide 2.. Part of the Sec protein translocase complex. Interacts with the SecYEG preprotein conducting channel. Has a central role in coupling the hydrolysis of ATP to the transfer of proteins into and across the cell membrane, serving as an ATP-driven molecular motor driving the stepwise translocation of polypeptide chains across the membrane. The sequence is that of Protein translocase subunit SecA from Latilactobacillus sakei subsp. sakei (strain 23K) (Lactobacillus sakei subsp. sakei).